Here is a 246-residue protein sequence, read N- to C-terminus: Complement C1q subcomponent subunit C (246 aa).

The N-terminal stretch at 1–29 (MVVGPSCQPPCGLCLLLLFLLALPLRSQA) is a signal peptide. One can recognise a Collagen-like domain in the interval 32 to 113 (GCYGIPGMPG…GPPGEPGVEG (82 aa)). Proline 37, proline 40, proline 43, proline 46, and proline 64 each carry 4-hydroxyproline. The tract at residues 44-116 (GAPGKDGHDG…GEPGVEGRYK (73 aa)) is disordered. A 5-hydroxylysine modification is found at lysine 76. Lysine 76 carries an O-linked (Gal...) hydroxylysine glycan. 4-hydroxyproline is present on residues proline 82, proline 97, proline 100, and proline 106. Positions 99-108 (DPGPRGPPGE) are enriched in pro residues. Residues 116 to 246 (KQKHQSVFTV…VFSGFLLFPD (131 aa)) form the C1q domain. Cysteine 180 and cysteine 194 are joined by a disulfide.

Core component of the complement C1 complex, a calcium-dependent complex composed of 1 molecule of the C1Q subcomplex, 2 molecules of C1R and 2 molecules of C1S. The C1Q subcomplex is composed 18 subunits: 3 chains of C1QA, C1QB, and C1QC trimerize to form 6 collagen-like triple helices connected to six globular ligand-recognition modules (C1q domain). Post-translationally, O-linked glycans consist of Glc-Gal disaccharides bound to the oxygen atom of post-translationally added hydroxyl groups.

Its subcellular location is the secreted. The protein localises to the cell surface. Its activity is regulated as follows. The C1Q subcomplex is inhibited by sulfated molecules, such as triterpenoid sulfates, heparan sulfate, or chondroitin sulfates. Its function is as follows. Core component of the complement C1 complex, a multiprotein complex that initiates the classical pathway of the complement system, a cascade of proteins that leads to phagocytosis and breakdown of pathogens and signaling that strengthens the adaptive immune system. The classical complement pathway is initiated by the C1Q subcomplex of the C1 complex, which specifically binds IgG or IgM immunoglobulins complexed with antigens, forming antigen-antibody complexes on the surface of pathogens: C1QA, together with C1QB and C1QC, specifically recognizes and binds the Fc regions of IgG or IgM via its C1q domain. Immunoglobulin-binding activates the proenzyme C1R, which cleaves C1S, initiating the proteolytic cascade of the complement system. The C1Q subcomplex is activated by a hexamer of IgG complexed with antigens, while it is activated by a pentameric IgM. The C1Q subcomplex also recognizes and binds phosphatidylserine exposed on the surface of cells undergoing programmed cell death, possibly promoting activation of the complement system. The protein is Complement C1q subcomponent subunit C of Mus musculus (Mouse).